Reading from the N-terminus, the 508-residue chain is H/ACA ribonucleoprotein complex subunit 4 (508 aa).

The segment at 1–29 (MADVEVRKEKKKKKIKEEPLDGDDIGTLQ) is disordered. The Nucleophile role is filled by Asp123. A PUA domain is found at 294–369 (HKRIIMKDSS…VVAKIKRVIM (76 aa)). The interval 423-508 (AAQEVSPTNG…KDRDRDEAQE (86 aa)) is disordered. Position 442 is a phosphoserine (Ser442). Residues 442–457 (STSSVEETAAAAVSEE) show a composition bias toward low complexity. Thr443 bears the Phosphothreonine mark. Phosphoserine is present on residues Ser444 and Ser445. Thr449 carries the post-translational modification Phosphothreonine. A Phosphoserine modification is found at Ser455. A Phosphothreonine modification is found at Thr458. Acidic residues predominate over residues 475–485 (EAPEAAEEEAE). Basic and acidic residues predominate over residues 499–508 (KDRDRDEAQE).

Belongs to the pseudouridine synthase TruB family. As to quaternary structure, component of the box H/ACA small nucleolar ribonucleoprotein (H/ACA snoRNP) complex consisting of Nop60B, Gar1, NPH2 and Nop10, and associated with H/ACA-type snoRNAs. As to expression, expressed at higher levels in females than in males. In terms of tissue distribution, expressed almost exclusively in females with high levels of expression in the ovary.

It is found in the nucleus. Its subcellular location is the nucleolus. It catalyses the reaction a uridine in RNA = a pseudouridine in RNA. In terms of biological role, catalytic subunit of the box H/ACA small nucleolar ribonucleoprotein (H/ACA snoRNP) complex, which catalyzes pseudouridylation of rRNA. This involves the isomerization of uridine such that the ribose is subsequently attached to C5, instead of the normal N1. Pseudouridine ('psi') residues may serve to stabilize the conformation of rRNAs. Required for ribosome biogenesis; plays a central role in ribosomal RNA processing. H/ACA snoRNP complex-dependent ribosome biogenesis is important in female germline cell differentiation during oogenesis. Essential for viability and female fertility. Required for maintenance of the germline stem cell lineage during spermatogenesis. This Drosophila melanogaster (Fruit fly) protein is H/ACA ribonucleoprotein complex subunit 4.